Consider the following 800-residue polypeptide: Elongation factor G, mitochondrial (800 aa).

Residues 1-59 (MRVIRAVATLHAGRAAAVRQGVRSVSLGACRAAVETPSLRSAGSQFESRRLFSRSSYLR) constitute a mitochondrion transit peptide. One can recognise a tr-type G domain in the interval 99 to 385 (ARVRNIGIAA…AVCDYLPNPN (287 aa)). GTP-binding positions include 108–115 (AHIDSGKT), 183–187 (DTPGH), and 237–240 (NKMD).

The protein belongs to the TRAFAC class translation factor GTPase superfamily. Classic translation factor GTPase family. EF-G/EF-2 subfamily.

It localises to the mitochondrion. The protein operates within protein biosynthesis; polypeptide chain elongation. In terms of biological role, mitochondrial GTPase that catalyzes the GTP-dependent ribosomal translocation step during translation elongation. During this step, the ribosome changes from the pre-translocational (PRE) to the post-translocational (POST) state as the newly formed A-site-bound peptidyl-tRNA and P-site-bound deacylated tRNA move to the P and E sites, respectively. Catalyzes the coordinated movement of the two tRNA molecules, the mRNA and conformational changes in the ribosome. This chain is Elongation factor G, mitochondrial (mef1), found in Neurospora crassa (strain ATCC 24698 / 74-OR23-1A / CBS 708.71 / DSM 1257 / FGSC 987).